The sequence spans 330 residues: Type I restriction enzyme MpnII specificity subunit (330 aa).

It belongs to the type-I restriction system S methylase family. As to quaternary structure, the methyltransferase is composed of M and S polypeptides.

Its function is as follows. The specificity (S) subunit of a type I restriction enzyme; this subunit dictates DNA sequence specificity. The M and S subunits together form a methyltransferase (MTase) that probably methylates A-2 on the top strand and A-3 on the bottom strand of the sequence 5'-GAN(7)TAY-3'. As the bacterial DNA is methylated on this sequence and this is the only type I methylase in the genome, it is probably responsible for all of the methylation on this site in the genome. The R subunit has multiple frameshifts and is probably not expressed in this bacteria. This is Type I restriction enzyme MpnII specificity subunit from Mycoplasma pneumoniae (strain ATCC 29342 / M129 / Subtype 1) (Mycoplasmoides pneumoniae).